The primary structure comprises 230 residues: ATP synthase subunit a (230 aa).

Transmembrane regions (helical) follow at residues 17 to 37 (LPITQSVLTTWFIMISLFIMA), 78 to 98 (IFPFVATLWIFILVSNLIGVI), 107 to 127 (DLSVTASLAMMTFLSVHWFGI), 165 to 187 (LFGNIMSLQLTALIVLMIAGFLV), and 198 to 218 (EAIIQAYIFGMLALIYIAGGI).

Belongs to the ATPase A chain family. In terms of assembly, F-type ATPases have 2 components, CF(1) - the catalytic core - and CF(0) - the membrane proton channel. CF(1) has five subunits: alpha(3), beta(3), gamma(1), delta(1), epsilon(1). CF(0) has three main subunits: a(1), b(2) and c(9-12). The alpha and beta chains form an alternating ring which encloses part of the gamma chain. CF(1) is attached to CF(0) by a central stalk formed by the gamma and epsilon chains, while a peripheral stalk is formed by the delta and b chains.

It localises to the cell inner membrane. Key component of the proton channel; it plays a direct role in the translocation of protons across the membrane. The sequence is that of ATP synthase subunit a from Legionella pneumophila (strain Corby).